The following is a 434-amino-acid chain: MTTQVVKVIGAGLAGSEAAYQIAKRGIQVHLYEMRPVKQTPAHHTDKFAELVCSNSLRANTLTNAVGVIKEEMRRMDSVIIRAADECSVPAGGALAVDRHEFAAKVTEYVKNHPNVTVMNEEITEIPEGPTVIATGPLTSPALAAQLKELTGEEYFYFYDAAAPIIEKDSIDMNKVYLKSRYDKGEAAYLNCPMTEDEFNRFYDALIAAETVPLKEFEKEIFFEGCMPVEVMAARGRQTLLFGPMKPVGLEDPKTGKTPYAVVQLRQDDAAGTLYNIVGFQTHLKWGPQKEVLQLIPGLENAEIVRYGVMHRNTFINSPKLLRPTYQYKHRDDLFFAGQMTGVEGYVESAASGLLAGINAARLLKGEEPVVLPSVTAMGSMANYITSTNAKNFQPMNANFGLFAPLEKKIKKKQERNEAYATRALETIQNFVNI.

Position 10 to 15 (10 to 15) interacts with FAD; that stretch reads GAGLAG.

It belongs to the MnmG family. TrmFO subfamily. The cofactor is FAD.

The protein resides in the cytoplasm. The enzyme catalyses uridine(54) in tRNA + (6R)-5,10-methylene-5,6,7,8-tetrahydrofolate + NADH + H(+) = 5-methyluridine(54) in tRNA + (6S)-5,6,7,8-tetrahydrofolate + NAD(+). It catalyses the reaction uridine(54) in tRNA + (6R)-5,10-methylene-5,6,7,8-tetrahydrofolate + NADPH + H(+) = 5-methyluridine(54) in tRNA + (6S)-5,6,7,8-tetrahydrofolate + NADP(+). Catalyzes the folate-dependent formation of 5-methyl-uridine at position 54 (M-5-U54) in all tRNAs. The sequence is that of Methylenetetrahydrofolate--tRNA-(uracil-5-)-methyltransferase TrmFO from Bacillus cytotoxicus (strain DSM 22905 / CIP 110041 / 391-98 / NVH 391-98).